The chain runs to 378 residues: Palmitoyltransferase PFA4 (378 aa).

Residues 1–9 lie on the Cytoplasmic side of the membrane; sequence MPVKLRWPW. A helical membrane pass occupies residues 10–30; sequence LGIAIPTFLISFIGYGAHYFI. At 31-40 the chain is on the lumenal side; that stretch reads LSNFLSVPKQ. The chain crosses the membrane as a helical span at residues 41–61; that stretch reads ITFEFCLSMIWLSYYLAICTN. At 62–119 the chain is on the cytoplasmic side; sequence PGRPLPNYKPPPDIWRNFCKKCQSYKPERSHHCKTCNQCVLMMDHHCPWTMNCVGFAN. One can recognise a DHHC domain in the interval 78-128; that stretch reads NFCKKCQSYKPERSHHCKTCNQCVLMMDHHCPWTMNCVGFANYPHFLRFLF. The active-site S-palmitoyl cysteine intermediate is the cysteine 108. A helical membrane pass occupies residues 120-140; that stretch reads YPHFLRFLFWIIVTTSVLFCI. At 141–164 the chain is on the lumenal side; it reads QAKRIYFIWQQRHLPGYFFKKSEL. The helical transmembrane segment at 165–185 threads the bilayer; it reads IFLTISSPLNSFVLLTITILF. The Cytoplasmic segment spans residues 186–378; that stretch reads LRCLFNQILN…DDFGVDVDME (193 aa).

The protein belongs to the DHHC palmitoyltransferase family. PFA4 subfamily. Autopalmitoylated.

The protein resides in the endoplasmic reticulum membrane. The catalysed reaction is L-cysteinyl-[protein] + hexadecanoyl-CoA = S-hexadecanoyl-L-cysteinyl-[protein] + CoA. In terms of biological role, mediates the reversible addition of palmitate to target proteins, thereby regulating their membrane association and biological function. Palmitoylates several amino acid permeases. Palmitoylates chitin synthase CHS3, which is required for its proper export from the ER. Can palmitoylate RAS2 in vitro. The sequence is that of Palmitoyltransferase PFA4 from Saccharomyces cerevisiae (strain ATCC 204508 / S288c) (Baker's yeast).